The sequence spans 104 residues: Phosphocarrier protein HPr (104 aa).

Positions 17-104 (ELSAIFMIRN…EVFNSGFGEL (88 aa)) constitute an HPr domain. The active-site Pros-phosphohistidine intermediate is the histidine 31.

Belongs to the HPr family.

It localises to the cytoplasm. In terms of biological role, general (non sugar-specific) component of the phosphoenolpyruvate-dependent sugar phosphotransferase system (sugar PTS). This major carbohydrate active-transport system catalyzes the phosphorylation of incoming sugar substrates concomitantly with their translocation across the cell membrane. The phosphoryl group from phosphoenolpyruvate (PEP) is transferred to the phosphoryl carrier protein HPr by enzyme I. Phospho-HPr then transfers it to the PTS EIIA domain. This Chlamydia muridarum (strain MoPn / Nigg) protein is Phosphocarrier protein HPr (ptsH).